The primary structure comprises 61 residues: Small ribosomal subunit protein uS14C (61 aa).

Residues cysteine 24, cysteine 27, cysteine 40, and cysteine 43 each contribute to the Zn(2+) site.

The protein belongs to the universal ribosomal protein uS14 family. Zinc-binding uS14 subfamily. Part of the 30S ribosomal subunit. Contacts proteins S3 and S10. Zn(2+) is required as a cofactor.

Its function is as follows. Binds 16S rRNA, required for the assembly of 30S particles and may also be responsible for determining the conformation of the 16S rRNA at the A site. This Enterococcus faecalis (strain ATCC 700802 / V583) protein is Small ribosomal subunit protein uS14C.